The chain runs to 489 residues: MLVLPLPLYEIIRHAPEWKPLEEVARELGSSVDSLMRYVEEGRAKGVLRVERKVIEFYELTEEGRQRAAEGLPEYKLLKSAVCREGRCTAHLSQHPEAQIALANLAKLGVKPRGNVVELDEETYKKIVAMLEEKQKALAAPHSAPPEVLKEFIKRKLVRKIEKTQVYVKAAVPLELVKPAEVKTVITSEDIATGRWRNYTLKPFDLNIEPPEYPAPVPHFFNEFLDYVREVMIGLGFEEVRGPVLEVEFWNFDALFQAQDHPAREVHDTFYVQWSGPLETPPEHLMESVGRVHEEKWRYKWDRKKALNPVLRTQTTATTIRALAERGDGEYKVFTIGRVFRPEKLDPKHSMEFHQLDGIVVGPGLTFKHLLGQLEEIAKALGMTKVKFRPAYFPFTSPSVEVYAQHPKLGWVEFGGAGIFRPEVTEPLGVKKSRVLAWGWGLDRIAMILLGIDDIRELFTKDLEKLKEYYARWARYKASVGAVGTLFTL.

L-phenylalanine is bound by residues threonine 316, 355-357, phenylalanine 395, and phenylalanine 420; that span reads QLD.

It belongs to the class-II aminoacyl-tRNA synthetase family. Phe-tRNA synthetase alpha subunit type 2 subfamily. Tetramer of two alpha and two beta subunits. Mg(2+) is required as a cofactor.

The protein resides in the cytoplasm. The enzyme catalyses tRNA(Phe) + L-phenylalanine + ATP = L-phenylalanyl-tRNA(Phe) + AMP + diphosphate + H(+). This Pyrobaculum aerophilum (strain ATCC 51768 / DSM 7523 / JCM 9630 / CIP 104966 / NBRC 100827 / IM2) protein is Phenylalanine--tRNA ligase alpha subunit.